A 475-amino-acid polypeptide reads, in one-letter code: MTEEKPAKKIGLLALIALVISSSIGSGVFGLTSDLASASAPGPVLIAWVIVGFGILMLALSLNNLLMKEPELEGIFSYAEKGFGPFAGFISGWGYWLSAWLGNVTFATILMSALGYFFPIFKSRQNLPSILVASVLSWSLTYFVNRGVEGAAAINTLVTICKLIPLFVFIIFGIVLFKGHLFTQAFWNNMSSSFVAGDVMSQIKNCMMVMMWVFVGIEGASMLSARAEKKSDAGKATILGLVSLLAIYILASVLPYGYLTQDQLASIKQPAMLYIFEQMVGTWGGYFIGVGLIISILGAWLSWTMLPAETMLLMAKQNLLPAYFGRVNKKKAPTFALVVTAGLIQVFLFTLLFTTKAYNFAYSLCTASIIVCYMLVAAYQIKYSWAHLQEKGNRQQLLIGVLALLFEIAGILMAGVSYLLLCFIAYIPGIYFYGRARKNNGHQHFLSKGEWLITTIIVIGAIIGIWLVVSGKIVI.

Transmembrane regions (helical) follow at residues 10–30 (IGLL…GVFG), 42–62 (GPVL…ALSL), 74–94 (GIFS…SGWG), 101–121 (LGNV…FPIF), 157–177 (LVTI…IVLF), 205–225 (NCMM…MLSA), 238–258 (ILGL…PYGY), 283–303 (WGGY…WLSW), 333–353 (PTFA…TLLF), 361–381 (AYSL…AYQI), 397–417 (LLIG…AGVS), and 451–471 (WLIT…VVSG).

Belongs to the amino acid-polyamine-organocation (APC) superfamily. Basic amino acid/polyamine antiporter (APA) (TC 2.A.3.2) family.

The protein localises to the cell membrane. The enzyme catalyses L-ornithine(in) + L-arginine(out) = L-ornithine(out) + L-arginine(in). In terms of biological role, catalyzes electroneutral exchange between L-arginine and L-ornithine. This chain is Arginine/ornithine antiporter (arcD), found in Latilactobacillus sakei (Lactobacillus sakei).